The chain runs to 100 residues: Colipase-like protein 2 (100 aa).

An N-terminal signal peptide occupies residues 1-21 (MAAALALVAGVLSGAVLPLWS). Cystine bridges form between Cys34-Cys45, Cys40-Cys56, Cys44-Cys78, Cys66-Cys86, and Cys80-Cys97.

It belongs to the colipase family.

Its subcellular location is the secreted. The sequence is that of Colipase-like protein 2 (CLPSL2) from Homo sapiens (Human).